The sequence spans 169 residues: Probable glutathione peroxidase 2 (169 aa).

Residue C41 is part of the active site.

This sequence belongs to the glutathione peroxidase family. As to quaternary structure, interacts with DJ1A. Expressed in leaves, stems, flowers, green siliques and roots.

The protein resides in the cytoplasm. It localises to the cytosol. The protein localises to the nucleus. It carries out the reaction 2 glutathione + H2O2 = glutathione disulfide + 2 H2O. Functionally, may constitute a glutathione peroxidase-like protective system against oxidative stresses. This Arabidopsis thaliana (Mouse-ear cress) protein is Probable glutathione peroxidase 2 (GPX2).